Consider the following 77-residue polypeptide: Secapin-2 (77 aa).

The first 32 residues, 1–32, serve as a signal peptide directing secretion; it reads MKNYSKNATYLITVLLFSFVTMLLIIPSKCEA. The propeptide occupies 33 to 52; that stretch reads VSNDMQPLEARTADLVQQPR. Cys61 and Cys72 form a disulfide bridge. Residue Pro77 is modified to Proline amide.

Belongs to the secapin family. In terms of tissue distribution, expressed by the venom gland.

It localises to the secreted. In terms of biological role, serine protease inhibitor which exhibits antifibrinolytic, antielastolytic and antimicrobial activities. Displays antimicrobial activity against bacteria and fungi. Likely functions in the innate immune response to microbial infection and possibly in the venom, as an antifibrinolytic agent. Induces hyperalgesia and edema mediated by leukotrienes when injected into mice. Does not induce hemolytic activity, mast cell degranulation, or chemotactic activity for polymorphonucleated leukocytes (PMNL). The protein is Secapin-2 of Apis mellifera (Honeybee).